The sequence spans 270 residues: Formamidopyrimidine-DNA glycosylase (270 aa).

Pro2 (schiff-base intermediate with DNA) is an active-site residue. Glu3 serves as the catalytic Proton donor. Lys58 serves as the catalytic Proton donor; for beta-elimination activity. His91, Arg110, and Arg151 together coordinate DNA. The FPG-type zinc finger occupies 236-270; that stretch reads FVYGRGGQPCKVCGTELREVKLGQRASVFCPKCQR. The Proton donor; for delta-elimination activity role is filled by Arg260.

This sequence belongs to the FPG family. As to quaternary structure, monomer. Zn(2+) serves as cofactor.

The catalysed reaction is Hydrolysis of DNA containing ring-opened 7-methylguanine residues, releasing 2,6-diamino-4-hydroxy-5-(N-methyl)formamidopyrimidine.. It carries out the reaction 2'-deoxyribonucleotide-(2'-deoxyribose 5'-phosphate)-2'-deoxyribonucleotide-DNA = a 3'-end 2'-deoxyribonucleotide-(2,3-dehydro-2,3-deoxyribose 5'-phosphate)-DNA + a 5'-end 5'-phospho-2'-deoxyribonucleoside-DNA + H(+). Functionally, involved in base excision repair of DNA damaged by oxidation or by mutagenic agents. Acts as a DNA glycosylase that recognizes and removes damaged bases. Has a preference for oxidized purines, such as 7,8-dihydro-8-oxoguanine (8-oxoG). Has AP (apurinic/apyrimidinic) lyase activity and introduces nicks in the DNA strand. Cleaves the DNA backbone by beta-delta elimination to generate a single-strand break at the site of the removed base with both 3'- and 5'-phosphates. The sequence is that of Formamidopyrimidine-DNA glycosylase from Pseudomonas entomophila (strain L48).